The sequence spans 118 residues: UPF0145 protein PTO0347 (118 aa).

This sequence belongs to the UPF0145 family.

This is UPF0145 protein PTO0347 from Picrophilus torridus (strain ATCC 700027 / DSM 9790 / JCM 10055 / NBRC 100828 / KAW 2/3).